The primary structure comprises 561 residues: Developmental and secondary metabolism regulator veA (561 aa).

3 disordered regions span residues 1-23 (MANR…RITR), 41-60 (ARAC…VDPP), and 258-361 (AYAR…PQGI). Basic and acidic residues predominate over residues 12 to 23 (NETEHSVSRITR). The 209-residue stretch at 25–233 (GKQLTYKLSV…AEQGCRVRIR (209 aa)) folds into the Velvet domain. A Nuclear localization signal motif is present at residues 39-44 (ERARAC). The segment covering 258-268 (AYARSSDRFTT) has biased composition (basic and acidic residues). Residues 324–339 (SHSQTPSYQSHLSFGS) are compositionally biased toward polar residues. Positions 347–357 (PHMPPTPPPVA) are enriched in pro residues. A PEST region spans residues 438–485 (RPQTPNLPAMPPPKPLSNDYANHVVPSVECTSPGGSGGGGYDNVRGKR). The interval 491 to 524 (GPTYGKRSHEDTFGLDDRSMQNGMRPDTEPYPAY) is disordered. The span at 497–509 (RSHEDTFGLDDRS) shows a compositional bias: basic and acidic residues.

Belongs to the velvet family. VeA subfamily. In terms of assembly, component of the heterotrimeric velvet complex composed of laeA, veA and velB; velA acting as a bridging protein between laeA and velB. Interacts with kapA. Interacts with vosA and velc.

It is found in the nucleus. The protein resides in the cytoplasm. Functionally, component of the velvet transcription factor complex that controls sexual/asexual developmental ratio in response to light, promoting sexual development in the darkness while stimulating asexual sporulation under illumination. The velvet complex acts as a global regulator for secondary metabolite gene expression. Controls the expression of the penicillin gene cluster. Positively controls the expression of the class V chitinase chiB1. Positively controls the expression of the transcription factor atfA. Required for cell wall integrity and controls hyphal branching. In Penicillium rubens (strain ATCC 28089 / DSM 1075 / NRRL 1951 / Wisconsin 54-1255) (Penicillium chrysogenum), this protein is Developmental and secondary metabolism regulator veA.